Reading from the N-terminus, the 446-residue chain is Baeyer-Villiger monooxygenase dmxR6 (446 aa).

The protein belongs to the AflY oxidoreductase family.

The protein operates within secondary metabolite biosynthesis. In terms of biological role, baeyer-Villiger monooxygenase; part of the gene cluster that mediates the biosynthesis of the dimeric xanthones cryptosporioptides. The pathway begins with the synthesis of atrochrysone thioester by the polyketide synthase dmx-nrPKS. The atrochrysone carboxyl ACP thioesterase dmxR1 then breaks the thioester bond and releases the atrochrysone carboxylic acid from dmx-nrPKS. Atrochrysone carboxylic acid is decarboxylated by the decarboxylase dmxR15, and oxidized by the anthrone oxygenase dmxR16 to yield emodin. Emodin is then reduced to emodin hydroquinone by the oxidoreductase dmxR7. A-ring reduction by the short chain dehydrogenase dmxR18, dehydration by the scytalone dehydratase-like protein dmxR17 and probable spontaneous re-oxidation, results in overall deoxygenation to chrysophanol. Baeyer-Villiger oxidation by the Baeyer-Villiger monooxygenase (BVMO) dmxR6 then yields monodictylactone in equilibrium with monodictyphenone. In the case of the cryptosporioptides biosynthesis, monodictylactone is reduced at C-12 to an alcohol (by the short chain dehydrogenases dmxR12 or dmxR8) and hydroxylated at C-5 by dmxR9, yielding the electron-rich aromatic which could eliminate H(2)O to form the ortho-quinonemethide, followed by tautomerisation to paraquinone and complete the formal reduction to produce the 10-methylgroup. Conjugate addition of C-4a-OH to the resulting paraquinone by the monooxygenase dmxR10 then gives cyclohexadienone, which is then reduced at C-5 by the short chain dehydrogenase dmxR3 to give the dihydroxanthone. The 6,7-epoxide in the cryptosporioptides could be introduced by the cytochrome P450 monooxygenase dmxL3. The highly reducing PKS dmxL2 manufactures butyrate, which is further carboxylated by dmxL1 to form ethylmalonate. It is not yet clear whether the carboxylation occurs while the butyrate is attached to the ACP of dmxL2, but this unusual fungal metabolite could then be esterified to O-5 by the O-acetyltransferase dmxR13. Finally, dimerization performed by dmxR5 gives the observed dimers cryptosporioptides A, B and C as the final products of the pathway. The protein is Baeyer-Villiger monooxygenase dmxR6 of Cryptosporiopsis sp. (strain 8999).